We begin with the raw amino-acid sequence, 422 residues long: Calpain-2 catalytic subunit (422 aa).

Positions 1-66 (QKLIRIRNPW…YSRLEICNLT (66 aa)) constitute a Calpain catalytic domain. Residue Asn8 is part of the active site. Positions 14, 21, and 45 each coordinate Ca(2+). Positions 67–236 (PDTLTSDTYK…KKADYQAVDD (170 aa)) are domain III. The segment at 237-251 (EIEADLEEADVSEDD) is linker. The tract at residues 252–422 (IDDGFRRLFA…LISWLCFSVL (171 aa)) is domain IV. Residues Ala264, Asp267, Glu269, Glu274, Asp307, Asp309, Thr311, Lys313, Glu318, Asp337, Asp339, Ser341, Thr343, Glu348, Asp380, and Asn383 each contribute to the Ca(2+) site. EF-hand domains are found at residues 294 to 327 (LSIETCKIMVDMLDSDGTGKLGLKEFYVLWTKIQ) and 324 to 359 (TKIQKYQKIYREIDVDRSGTMNSYEMRKALEEAGFK). The EF-hand 3 domain occupies 389–422 (VRLETLFKIFKQLDPDNTGMIQLDLISWLCFSVL).

The protein belongs to the peptidase C2 family. As to quaternary structure, forms a heterodimer with a small (regulatory) subunit (CAPNS1). Interacts with CPEB3; this leads to cleavage of CPEB3. The cofactor is Ca(2+). In terms of tissue distribution, ubiquitous.

Its subcellular location is the cytoplasm. The protein localises to the cell membrane. It carries out the reaction Broad endopeptidase specificity.. Activated by 200-1000 micromolar concentrations of calcium and inhibited by calpastatin. Functionally, calcium-regulated non-lysosomal thiol-protease which catalyzes limited proteolysis of substrates involved in cytoskeletal remodeling and signal transduction. Proteolytically cleaves MYOC at 'Arg-226'. Proteolytically cleaves CPEB3 following neuronal stimulation which abolishes CPEB3 translational repressor activity, leading to translation of CPEB3 target mRNAs. In Oryctolagus cuniculus (Rabbit), this protein is Calpain-2 catalytic subunit (CAPN2).